A 605-amino-acid chain; its full sequence is Bifunctional purine biosynthesis protein ADE16 (605 aa).

An MGS-like domain is found at 1–147 (MSSEAPIALL…KNHGRVSIIS (147 aa)). IMP-binding positions include 35–38 (SGGT), 65–68 (RVKT), 102–103 (CN), and 126–127 (DI). K138 (proton donor/acceptor; for FAICAR cyclization activity) is an active-site residue. Residues 219–220 (RY), H279, G327, D350, N442, and R462 each bind 5-amino-1-(5-phospho-beta-D-ribosyl)imidazole-4-carboxamide. H279 functions as the Proton acceptor; for AICAR formyltransferase activity in the catalytic mechanism. Position 463 (I463) interacts with (6R)-10-formyltetrahydrofolate. Residue F554 coordinates 5-amino-1-(5-phospho-beta-D-ribosyl)imidazole-4-carboxamide. A (6R)-10-formyltetrahydrofolate-binding site is contributed by D559. R601 lines the 5-amino-1-(5-phospho-beta-D-ribosyl)imidazole-4-carboxamide pocket.

Belongs to the PurH family. As to quaternary structure, homodimer.

It is found in the cytoplasm. The protein resides in the cytosol. It catalyses the reaction (6R)-10-formyltetrahydrofolate + 5-amino-1-(5-phospho-beta-D-ribosyl)imidazole-4-carboxamide = 5-formamido-1-(5-phospho-D-ribosyl)imidazole-4-carboxamide + (6S)-5,6,7,8-tetrahydrofolate. It carries out the reaction IMP + H2O = 5-formamido-1-(5-phospho-D-ribosyl)imidazole-4-carboxamide. The protein operates within purine metabolism; IMP biosynthesis via de novo pathway; 5-formamido-1-(5-phospho-D-ribosyl)imidazole-4-carboxamide from 5-amino-1-(5-phospho-D-ribosyl)imidazole-4-carboxamide (10-formyl THF route): step 1/1. It participates in purine metabolism; IMP biosynthesis via de novo pathway; IMP from 5-formamido-1-(5-phospho-D-ribosyl)imidazole-4-carboxamide: step 1/1. Bifunctional enzyme that catalyzes the last two steps of purine biosynthesis. Acts as a transformylase that incorporates a formyl group to the AMP analog AICAR (5-amino-1-(5-phospho-beta-D-ribosyl)imidazole-4-carboxamide) to produce the intermediate formyl-AICAR (FAICAR). Also catalyzes the cyclization of FAICAR to IMP. This Cryptococcus neoformans var. grubii serotype A (strain H99 / ATCC 208821 / CBS 10515 / FGSC 9487) (Filobasidiella neoformans var. grubii) protein is Bifunctional purine biosynthesis protein ADE16.